Consider the following 176-residue polypeptide: Nutrient stress-induced DNA-binding protein (176 aa).

Belongs to the Dps family. Hexamer.

Functionally, involved in protection of chromosomal DNA from damage under nutrient-limited and oxidative stress conditions. Binds heme. The sequence is that of Nutrient stress-induced DNA-binding protein (dpsA) from Synechococcus sp. (strain ATCC 27144 / PCC 6301 / SAUG 1402/1) (Anacystis nidulans).